A 764-amino-acid chain; its full sequence is Sesterfisherol synthase (764 aa).

The interval 2 to 331 is terpene cyclase; the sequence is EVWEHSRPIA…SPRHHAWRNN (330 aa). Residue D95 participates in Mg(2+) binding. Substrate contacts are provided by residues D95, 187–190, N231, 235–239, and 324–325; these read RRDD, SFDRE, and RH. The DDXXD 1 signature appears at 95–99; sequence DDGYE. Positions 231–239 match the NSE/DTE motif; that stretch reads NDYWSFDRE. The segment at 332–759 is prenyltransferase; it reads SRNGLKPANH…PMLRLLLEKL (428 aa). Positions 347 to 372 are disordered; the sequence is LITPSNNLNSSKGSEEQMQDSDNGTR. The span at 348-358 shows a compositional bias: polar residues; sequence ITPSNNLNSSK. Residues K476, R479, and H508 each coordinate isopentenyl diphosphate. Residues D515 and D519 each contribute to the Mg(2+) site. Residues 515 to 519 carry the DDXXD 2 motif; it reads DDIED. R524 is a binding site for dimethylallyl diphosphate. Position 525 (R525) interacts with isopentenyl diphosphate. K602, T603, Q638, N645, K655, and K665 together coordinate dimethylallyl diphosphate.

The protein in the N-terminal section; belongs to the terpene synthase family. It in the C-terminal section; belongs to the FPP/GGPP synthase family. Hexamer. It depends on Mg(2+) as a cofactor.

The catalysed reaction is isopentenyl diphosphate + (2E,6E)-farnesyl diphosphate = (2E,6E,10E)-geranylgeranyl diphosphate + diphosphate. It carries out the reaction isopentenyl diphosphate + (2E,6E,10E)-geranylgeranyl diphosphate = (2E,6E,10E,14E)-geranylfarnesyl diphosphate + diphosphate. The enzyme catalyses (2E,6E,10E,14E)-geranylfarnesyl diphosphate + H2O = sesterfisherol + diphosphate. It participates in secondary metabolite biosynthesis; terpenoid biosynthesis. In terms of biological role, bifunctional terpene synthase; part of the gene cluster that mediates the biosynthesis of sesterfisheric acid. The bifunctional terpene synthase NfSS converts dimethylallyl diphosphate (DMAPP) and isopentenyl diphosphate (IPP) into sesterfisherol. The C-terminal prenyltransferase (PT) domain of NfSS catalyzes formation of geranylfarnesyl pyrophosphate (GFPP), whereas the N-terminal terpene cyclase (TC) domain catalyzes the cyclization of GFPP to sesterfisherol. The cytochrome P450 monooxygenase NfP450 then catalyzes oxidative modifications of sesterfisherol into sesterfisheric acid. In Neosartorya fischeri (strain ATCC 1020 / DSM 3700 / CBS 544.65 / FGSC A1164 / JCM 1740 / NRRL 181 / WB 181) (Aspergillus fischerianus), this protein is Sesterfisherol synthase.